A 199-amino-acid polypeptide reads, in one-letter code: dITP/XTP pyrophosphatase (199 aa).

A substrate-binding site is contributed by 8–13 (SGNAGK). Asp69 (proton acceptor) is an active-site residue. Asp69 contacts Mg(2+). Substrate-binding positions include Ser70, 154–157 (FGYN), Lys177, and 182–183 (HR).

Belongs to the HAM1 NTPase family. In terms of assembly, homodimer. Requires Mg(2+) as cofactor.

It catalyses the reaction XTP + H2O = XMP + diphosphate + H(+). It carries out the reaction dITP + H2O = dIMP + diphosphate + H(+). The enzyme catalyses ITP + H2O = IMP + diphosphate + H(+). Pyrophosphatase that catalyzes the hydrolysis of nucleoside triphosphates to their monophosphate derivatives, with a high preference for the non-canonical purine nucleotides XTP (xanthosine triphosphate), dITP (deoxyinosine triphosphate) and ITP. Seems to function as a house-cleaning enzyme that removes non-canonical purine nucleotides from the nucleotide pool, thus preventing their incorporation into DNA/RNA and avoiding chromosomal lesions. The sequence is that of dITP/XTP pyrophosphatase from Xylella fastidiosa (strain 9a5c).